The primary structure comprises 91 residues: Defensin-like protein 82 (91 aa).

The first 27 residues, 1–27, serve as a signal peptide directing secretion; sequence MAIKKFSSLLLPLLMVLALVVLPIISG. Cystine bridges form between C34/C72, C41/C62, C47/C70, and C51/C71.

This sequence belongs to the DEFL family.

The protein resides in the secreted. The protein is Defensin-like protein 82 of Arabidopsis thaliana (Mouse-ear cress).